Here is a 142-residue protein sequence, read N- to C-terminus: UPF0305 protein MK0666 (142 aa).

This sequence belongs to the UPF0305 family.

The protein is UPF0305 protein MK0666 of Methanopyrus kandleri (strain AV19 / DSM 6324 / JCM 9639 / NBRC 100938).